A 242-amino-acid chain; its full sequence is Lactate utilization protein A 2 (242 aa).

The protein belongs to the LutA/YkgE family.

Its function is as follows. Is involved in L-lactate degradation and allows cells to grow with lactate as the sole carbon source. This Bacillus cereus (strain 03BB102) protein is Lactate utilization protein A 2.